Here is a 1040-residue protein sequence, read N- to C-terminus: Multidrug resistance protein MdtB (1040 aa).

12 consecutive transmembrane segments (helical) span residues 16–36, 347–367, 369–389, 396–416, 440–460, 472–492, 537–557, 863–883, 888–908, 911–931, 968–988, and 998–1018; these read FIMR…AGII, LMMA…NIPA, IIPG…MVFL, LTLM…IVVI, IGFT…PLLF, FAIT…TLTP, WLTL…WVFI, LGST…VLGI, FIHP…ALLA, IAGS…IGIV, ILMT…STGV, and IGMV…TPVI.

This sequence belongs to the resistance-nodulation-cell division (RND) (TC 2.A.6) family. MdtB subfamily. Part of a tripartite efflux system composed of MdtA, MdtB and MdtC. MdtB forms a heteromultimer with MdtC.

The protein localises to the cell inner membrane. Functionally, the MdtABC tripartite complex confers resistance against novobiocin and deoxycholate. The polypeptide is Multidrug resistance protein MdtB (Escherichia coli O17:K52:H18 (strain UMN026 / ExPEC)).